A 250-amino-acid polypeptide reads, in one-letter code: Phosphoribosylaminoimidazole-succinocarboxamide synthase (250 aa).

Belongs to the SAICAR synthetase family.

It catalyses the reaction 5-amino-1-(5-phospho-D-ribosyl)imidazole-4-carboxylate + L-aspartate + ATP = (2S)-2-[5-amino-1-(5-phospho-beta-D-ribosyl)imidazole-4-carboxamido]succinate + ADP + phosphate + 2 H(+). The protein operates within purine metabolism; IMP biosynthesis via de novo pathway; 5-amino-1-(5-phospho-D-ribosyl)imidazole-4-carboxamide from 5-amino-1-(5-phospho-D-ribosyl)imidazole-4-carboxylate: step 1/2. The polypeptide is Phosphoribosylaminoimidazole-succinocarboxamide synthase (Synechococcus sp. (strain WH7803)).